Reading from the N-terminus, the 614-residue chain is DNA mismatch repair protein MutL (614 aa).

This sequence belongs to the DNA mismatch repair MutL/HexB family.

Functionally, this protein is involved in the repair of mismatches in DNA. It is required for dam-dependent methyl-directed DNA mismatch repair. May act as a 'molecular matchmaker', a protein that promotes the formation of a stable complex between two or more DNA-binding proteins in an ATP-dependent manner without itself being part of a final effector complex. The protein is DNA mismatch repair protein MutL of Thermoanaerobacter pseudethanolicus (strain ATCC 33223 / 39E) (Clostridium thermohydrosulfuricum).